The primary structure comprises 398 residues: Glucose-1-phosphate adenylyltransferase (398 aa).

Residues tyrosine 100, glycine 165, 180 to 181, and serine 191 contribute to the alpha-D-glucose 1-phosphate site; that span reads EK.

Belongs to the bacterial/plant glucose-1-phosphate adenylyltransferase family. In terms of assembly, homotetramer.

It catalyses the reaction alpha-D-glucose 1-phosphate + ATP + H(+) = ADP-alpha-D-glucose + diphosphate. It functions in the pathway glycan biosynthesis; glycogen biosynthesis. Functionally, involved in the biosynthesis of ADP-glucose, a building block required for the elongation reactions to produce glycogen. Catalyzes the reaction between ATP and alpha-D-glucose 1-phosphate (G1P) to produce pyrophosphate and ADP-Glc. The protein is Glucose-1-phosphate adenylyltransferase of Desulfitobacterium hafniense (strain Y51).